Here is a 132-residue protein sequence, read N- to C-terminus: Small ribosomal subunit protein uS8 (132 aa).

The protein belongs to the universal ribosomal protein uS8 family. Part of the 30S ribosomal subunit. Contacts proteins S5 and S12.

Its function is as follows. One of the primary rRNA binding proteins, it binds directly to 16S rRNA central domain where it helps coordinate assembly of the platform of the 30S subunit. The sequence is that of Small ribosomal subunit protein uS8 from Tropheryma whipplei (strain Twist) (Whipple's bacillus).